The chain runs to 846 residues: Translation initiation factor IF-2 (846 aa).

The disordered stretch occupies residues 198 to 219 (YKREEEEKKSKAKKAGGKGFKK). The segment covering 207-219 (SKAKKAGGKGFKK) has biased composition (basic residues). Residues 345-512 (SRAPVVTIMG…AVLLQSEVLE (168 aa)) enclose the tr-type G domain. A G1 region spans residues 354-361 (GHVDHGKT). Residue 354–361 (GHVDHGKT) participates in GTP binding. Residues 379-383 (GITQH) form a G2 region. The interval 400–403 (DTPG) is G3. Residues 400 to 404 (DTPGH) and 454 to 457 (NKID) contribute to the GTP site. A G4 region spans residues 454–457 (NKID). Residues 490-492 (SAK) form a G5 region.

Belongs to the TRAFAC class translation factor GTPase superfamily. Classic translation factor GTPase family. IF-2 subfamily.

The protein resides in the cytoplasm. Functionally, one of the essential components for the initiation of protein synthesis. Protects formylmethionyl-tRNA from spontaneous hydrolysis and promotes its binding to the 30S ribosomal subunits. Also involved in the hydrolysis of GTP during the formation of the 70S ribosomal complex. The sequence is that of Translation initiation factor IF-2 from Francisella tularensis subsp. tularensis (strain SCHU S4 / Schu 4).